The sequence spans 279 residues: Inorganic pyrophosphatase 2 (279 aa).

The active-site Nucleophile is aspartate 12. Residues aspartate 12 and aspartate 14 each coordinate Mg(2+). The active-site Proton donor is aspartate 14. Positions 23 and 98 each coordinate substrate. Position 182 (aspartate 182) interacts with Mg(2+).

It belongs to the HAD-like hydrolase superfamily. In terms of assembly, tetramer. It depends on Mg(2+) as a cofactor.

It catalyses the reaction diphosphate + H2O = 2 phosphate + H(+). Its function is as follows. Catalyzes the specific cleavage of pyrophosphate. In Arabidopsis thaliana (Mouse-ear cress), this protein is Inorganic pyrophosphatase 2.